The sequence spans 124 residues: Small ribosomal subunit protein uS12c (124 aa).

Disordered regions lie at residues 1–28 and 104–124; these read MPTI…QSCP and AAGV…KPKS. Basic residues-rich tracts occupy residues 11–20 and 109–124; these read ERRKIHKKTK and DRRK…KPKS.

This sequence belongs to the universal ribosomal protein uS12 family. In terms of assembly, part of the 30S ribosomal subunit.

It is found in the plastid. Its subcellular location is the chloroplast. Functionally, with S4 and S5 plays an important role in translational accuracy. Located at the interface of the 30S and 50S subunits. This Pyropia yezoensis (Susabi-nori) protein is Small ribosomal subunit protein uS12c (rps12).